The following is a 110-amino-acid chain: Prothymosin alpha (110 aa).

M1 is modified (N-acetylmethionine). Positions 1 to 110 are disordered; it reads MSDAAVDTSS…TKKQKTDEDD (110 aa). N-acetylserine; in Prothymosin alpha, N-terminally processed is present on S2. Phosphoserine is present on S2. T8 is modified (phosphothreonine; by CK2). Residues S9 and S10 each carry the phosphoserine modification. Residues T13 and T14 each carry the phosphothreonine; by CK2 modification. Basic and acidic residues predominate over residues 13-31; it reads TTKDLKEKKEVVEEAENGR. K15 carries the N6-acetyllysine; alternate modification. Position 15 is an N6-succinyllysine; alternate (K15). A compositionally biased stretch (low complexity) spans 32–41; it reads EAPANGNANE. Positions 42–83 are enriched in acidic residues; that stretch reads ENGEQEADNEVDEEEEEGGEEEEEEEEGDGEEEDGDEDEEAE. Residues 100–110 are compositionally biased toward basic and acidic residues; sequence DTKKQKTDEDD. Phosphothreonine is present on T101. An N6-acetyllysine; alternate modification is found at K102. K102 participates in a covalent cross-link: Glycyl lysine isopeptide (Lys-Gly) (interchain with G-Cter in SUMO2); alternate. T106 bears the Phosphothreonine mark.

This sequence belongs to the pro/parathymosin family. In terms of assembly, interacts with NUPR1; regulates apoptotic process. Post-translationally, covalently linked to a small RNA of about 20 nucleotides.

The protein resides in the nucleus. Functionally, prothymosin alpha may mediate immune function by conferring resistance to certain opportunistic infections. This chain is Prothymosin alpha (PTMA), found in Bos taurus (Bovine).